Consider the following 107-residue polypeptide: Large ribosomal subunit protein bL21 (107 aa).

It belongs to the bacterial ribosomal protein bL21 family. Part of the 50S ribosomal subunit. Contacts protein L20.

Its function is as follows. This protein binds to 23S rRNA in the presence of protein L20. In Chlamydia muridarum (strain MoPn / Nigg), this protein is Large ribosomal subunit protein bL21.